Reading from the N-terminus, the 540-residue chain is Probable protein kinase UbiB (540 aa).

The chain crosses the membrane as a helical span at residues 24-44; sequence LLFDQPLLPWWLASLRLLMPW. One can recognise a Protein kinase domain in the interval 126 to 494; that stretch reads RFDVEPLASA…RRRQGDRWAL (369 aa). ATP is bound by residues 132 to 140 and K154; that span reads LASASVAQV. The Proton acceptor role is filled by D289. The next 2 helical transmembrane spans lie at 496 to 516 and 518 to 538; these read LLGAGLLGGGAVLAAGAAETA and LAAPAAWPAWLMLAAGLYLIV.

Belongs to the ABC1 family. UbiB subfamily.

It is found in the cell inner membrane. The protein operates within cofactor biosynthesis; ubiquinone biosynthesis [regulation]. Its function is as follows. Is probably a protein kinase regulator of UbiI activity which is involved in aerobic coenzyme Q (ubiquinone) biosynthesis. The protein is Probable protein kinase UbiB of Pseudomonas putida (strain ATCC 700007 / DSM 6899 / JCM 31910 / BCRC 17059 / LMG 24140 / F1).